The following is a 243-amino-acid chain: Small ribosomal subunit protein uS3 (243 aa).

One can recognise a KH type-2 domain in the interval 39-107; that stretch reads MRKFVMSELK…ETHLNIVEVR (69 aa). The interval 214–243 is disordered; it reads ASERRAMEGDAQGPASRDRDRDRDRRRDNA. Residues 229–243 show a composition bias toward basic and acidic residues; it reads SRDRDRDRDRRRDNA.

Belongs to the universal ribosomal protein uS3 family. Part of the 30S ribosomal subunit. Forms a tight complex with proteins S10 and S14.

Functionally, binds the lower part of the 30S subunit head. Binds mRNA in the 70S ribosome, positioning it for translation. This chain is Small ribosomal subunit protein uS3, found in Rhizobium johnstonii (strain DSM 114642 / LMG 32736 / 3841) (Rhizobium leguminosarum bv. viciae).